The following is a 517-amino-acid chain: Beta-galactoside alpha-2,6-sialyltransferase 2 (517 aa).

Over 1 to 10 (MKPNLKQWKQ) the chain is Cytoplasmic. Residues 11–31 (FMLFGICAWGLLFLVIFVYFT) traverse the membrane as a helical; Signal-anchor for type II membrane protein segment. The Lumenal segment spans residues 32 to 517 (DSNSVEPVPS…IHCPIKDHIT (486 aa)). N-linked (GlcNAc...) asparagine glycans are attached at residues Asn-201, Asn-298, and Asn-328. 3 cysteine pairs are disulfide-bonded: Cys-244–Cys-510, Cys-287–Cys-439, and Cys-457–Cys-468.

It belongs to the glycosyltransferase 29 family.

It localises to the golgi apparatus. The protein resides in the golgi stack membrane. The enzyme catalyses a beta-D-galactoside + CMP-N-acetyl-beta-neuraminate = an N-acetyl-alpha-neuraminyl-(2-&gt;6)-beta-D-galactosyl derivative + CMP + H(+). In terms of biological role, transfers sialic acid from the donor of substrate CMP-sialic acid to galactose containing acceptor substrates. The polypeptide is Beta-galactoside alpha-2,6-sialyltransferase 2 (st6gal2) (Xenopus tropicalis (Western clawed frog)).